A 673-amino-acid chain; its full sequence is Fatty acyl-CoA synthetase B (673 aa).

An N-terminal signal peptide occupies residues 1-18 (MINNWLAVGLLVVSGILA). An N-linked (GlcNAc...) asparagine glycan is attached at Asn267.

It belongs to the ATP-dependent AMP-binding enzyme family.

Its subcellular location is the endoplasmic reticulum. The catalysed reaction is a long-chain fatty acid + ATP + CoA = a long-chain fatty acyl-CoA + AMP + diphosphate. In terms of biological role, long chain fatty acid acyl-CoA synthetases catalyze the formation of a thiester bond between a free fatty acid and coenzyme A during fatty acid metabolic process. The polypeptide is Fatty acyl-CoA synthetase B (fcsB) (Dictyostelium discoideum (Social amoeba)).